Here is a 636-residue protein sequence, read N- to C-terminus: Threonine--tRNA ligase (636 aa).

The 63-residue stretch at 1–63 folds into the TGS domain; it reads MINITTSFPN…SKDGSVDPVT (63 aa). Positions 244–535 are catalytic; it reads DHRKIAKDLG…LIEHYAGNIP (292 aa). Zn(2+)-binding residues include Cys-335, His-386, and His-512.

It belongs to the class-II aminoacyl-tRNA synthetase family. As to quaternary structure, homodimer. The cofactor is Zn(2+).

Its subcellular location is the cytoplasm. The enzyme catalyses tRNA(Thr) + L-threonine + ATP = L-threonyl-tRNA(Thr) + AMP + diphosphate + H(+). Catalyzes the attachment of threonine to tRNA(Thr) in a two-step reaction: L-threonine is first activated by ATP to form Thr-AMP and then transferred to the acceptor end of tRNA(Thr). Also edits incorrectly charged L-seryl-tRNA(Thr). This is Threonine--tRNA ligase from Anaplasma marginale (strain Florida).